The sequence spans 234 residues: Myelin protein zero-like protein 3 (234 aa).

Residues 1–31 form the signal peptide; that stretch reads MQQSGVPGSRGCALCPLLGVLFFQGVYVIFS. The 117-residue stretch at 32-148 folds into the Ig-like V-type domain; the sequence is LEIKADAHVR…NIPATELTVT (117 aa). At 32-158 the chain is on the extracellular side; sequence LEIKADAHVR…ERGFGTMLSS (127 aa). The cysteines at positions 52 and 128 are disulfide-linked. An N-linked (GlcNAc...) asparagine glycan is attached at asparagine 123. A helical membrane pass occupies residues 159–179; it reads VALLSILVFIPSTVVVILLLV. Topologically, residues 180-234 are cytoplasmic; that stretch reads RMGRKSAGLKKRSKSGYKKSSIEVSDDTDQEGDDCMAKLCVRCAECVDSDYEETY.

The protein belongs to the myelin P0 protein family.

It localises to the membrane. Mediates homophilic cell-cell adhesion. The polypeptide is Myelin protein zero-like protein 3 (MPZL3) (Bos taurus (Bovine)).